We begin with the raw amino-acid sequence, 456 residues long: Kynurenine 3-monooxygenase (456 aa).

The protein belongs to the aromatic-ring hydroxylase family. KMO subfamily. The cofactor is FAD.

The protein resides in the mitochondrion outer membrane. The catalysed reaction is L-kynurenine + NADPH + O2 + H(+) = 3-hydroxy-L-kynurenine + NADP(+) + H2O. Its pathway is cofactor biosynthesis; NAD(+) biosynthesis; quinolinate from L-kynurenine: step 1/3. Functionally, catalyzes the hydroxylation of L-kynurenine (L-Kyn) to form 3-hydroxy-L-kynurenine (L-3OHKyn). Required for synthesis of quinolinic acid. The chain is Kynurenine 3-monooxygenase from Candida albicans (strain SC5314 / ATCC MYA-2876) (Yeast).